A 194-amino-acid chain; its full sequence is 7-methyl-GTP pyrophosphatase (194 aa).

The active-site Proton acceptor is Asp-71.

Belongs to the Maf family. YceF subfamily. A divalent metal cation is required as a cofactor.

It is found in the cytoplasm. The enzyme catalyses N(7)-methyl-GTP + H2O = N(7)-methyl-GMP + diphosphate + H(+). Nucleoside triphosphate pyrophosphatase that hydrolyzes 7-methyl-GTP (m(7)GTP). May have a dual role in cell division arrest and in preventing the incorporation of modified nucleotides into cellular nucleic acids. The chain is 7-methyl-GTP pyrophosphatase from Aromatoleum aromaticum (strain DSM 19018 / LMG 30748 / EbN1) (Azoarcus sp. (strain EbN1)).